The following is a 441-amino-acid chain: Ribosomal protein uS12 methylthiotransferase RimO (441 aa).

An MTTase N-terminal domain is found at 8–118 (PKIGFVSLGC…VLEHVHHYVP (111 aa)). [4Fe-4S] cluster-binding residues include C17, C53, C82, C150, C154, and C157. Positions 136–373 (LTPRHYAYLK…MQLQQQISAE (238 aa)) constitute a Radical SAM core domain. The TRAM domain occupies 376 to 441 (QEKVGREILV…DEYDLWGSRV (66 aa)).

This sequence belongs to the methylthiotransferase family. RimO subfamily. Requires [4Fe-4S] cluster as cofactor.

It is found in the cytoplasm. The catalysed reaction is L-aspartate(89)-[ribosomal protein uS12]-hydrogen + (sulfur carrier)-SH + AH2 + 2 S-adenosyl-L-methionine = 3-methylsulfanyl-L-aspartate(89)-[ribosomal protein uS12]-hydrogen + (sulfur carrier)-H + 5'-deoxyadenosine + L-methionine + A + S-adenosyl-L-homocysteine + 2 H(+). Its function is as follows. Catalyzes the methylthiolation of an aspartic acid residue of ribosomal protein uS12. This is Ribosomal protein uS12 methylthiotransferase RimO from Escherichia coli (strain SMS-3-5 / SECEC).